A 129-amino-acid chain; its full sequence is Small ribosomal subunit protein bS6 (129 aa).

Over residues phenylalanine 110 to threonine 121 the composition is skewed to basic and acidic residues. A disordered region spans residues phenylalanine 110 to glutamate 129.

It belongs to the bacterial ribosomal protein bS6 family.

Binds together with bS18 to 16S ribosomal RNA. The polypeptide is Small ribosomal subunit protein bS6 (Aeromonas salmonicida (strain A449)).